Here is a 121-residue protein sequence, read N- to C-terminus: Probable V-type proton ATPase subunit F (121 aa).

It belongs to the V-ATPase F subunit family. V-ATPase is a heteromultimeric enzyme made up of two complexes: the ATP-hydrolytic V1 complex and the proton translocation V0 complex. The V1 complex consists of three catalytic AB heterodimers that form a heterohexamer, three peripheral stalks each consisting of EG heterodimers, one central rotor including subunits D and F, and the regulatory subunits C and H. The proton translocation complex V0 consists of the proton transport subunit a, a ring of proteolipid subunits c9c'', rotary subunit d, subunits e and f, and the accessory subunits vah-19/Ac45 and vah-20/PRR.

Its function is as follows. Subunit of the V1 complex of vacuolar(H+)-ATPase (V-ATPase), a multisubunit enzyme composed of a peripheral complex (V1) that hydrolyzes ATP and a membrane integral complex (V0) that translocates protons. V-ATPase is responsible for acidifying and maintaining the pH of intracellular compartments and in some cell types, is targeted to the plasma membrane, where it is responsible for acidifying the extracellular environment. Required along with other vacuolar ATPase components for the removal of protein aggregates which form in immature oocytes in the distal gonad. This removal occurs as the oocytes mature and move to the proximal gonad, is triggered by the introduction of sperm through mating and occurs before fertilization. The introduction of sperm triggers V-ATPase accumulation in proximal oocytes and induces lysosomal acidification which leads to engulfing of protein aggregates by lysosomes and subsequent clearance of the aggregates. Lysosomal acidification also leads to changes in mitochondrial morphology and function. Mitochondria in distal immature oocytes are fragmented, produce high levels of reactive oxygen species (ROS) and have high membrane potential, indicative of metabolic inactivity. In contrast, mitochondria in proximal mature oocytes are tubular with lower ROS levels and membrane potential, indicative of an active metabolic state required for aggregate mobilization before clearance. The sequence is that of Probable V-type proton ATPase subunit F from Caenorhabditis elegans.